A 225-amino-acid chain; its full sequence is MENILQNDWGPLLGPEFEKEYYQNLANFLKEEYEEHVIYPKVEDIFNALQYTSYENTKVVILGQDPYHGPNQAHGLSFSVQPGIKTPPSLLNMYKELRDEYGYEIPNNGYLVKWAEQGVLLLNTVLTVRQGEANSHKGKGWEHFTDRVIELLNEREKPVIFILWGRHAQAKKKLITNTSHRIIESVHPSPLSARRGFFGSKPYSKVNTILANMGEREIDWEIPNL.

The Proton acceptor role is filled by Asp65.

This sequence belongs to the uracil-DNA glycosylase (UDG) superfamily. UNG family.

The protein resides in the cytoplasm. It catalyses the reaction Hydrolyzes single-stranded DNA or mismatched double-stranded DNA and polynucleotides, releasing free uracil.. Its function is as follows. Excises uracil residues from the DNA which can arise as a result of misincorporation of dUMP residues by DNA polymerase or due to deamination of cytosine. The chain is Uracil-DNA glycosylase from Bacillus mycoides (strain KBAB4) (Bacillus weihenstephanensis).